Here is a 456-residue protein sequence, read N- to C-terminus: Enolase (456 aa).

Gln164 contacts (2R)-2-phosphoglycerate. Catalysis depends on Glu207, which acts as the Proton donor. Residues Asp244, Glu287, and Asp314 each contribute to the Mg(2+) site. (2R)-2-phosphoglycerate-binding residues include Lys339, Arg368, Ser369, and Lys390. Lys339 serves as the catalytic Proton acceptor.

Belongs to the enolase family. Component of the RNA degradosome, a multiprotein complex involved in RNA processing and mRNA degradation. The cofactor is Mg(2+).

The protein localises to the cytoplasm. It is found in the secreted. It localises to the cell surface. The catalysed reaction is (2R)-2-phosphoglycerate = phosphoenolpyruvate + H2O. The protein operates within carbohydrate degradation; glycolysis; pyruvate from D-glyceraldehyde 3-phosphate: step 4/5. In terms of biological role, catalyzes the reversible conversion of 2-phosphoglycerate (2-PG) into phosphoenolpyruvate (PEP). It is essential for the degradation of carbohydrates via glycolysis. This chain is Enolase, found in Francisella tularensis subsp. holarctica (strain LVS).